The chain runs to 136 residues: Ergosterol biosynthetic protein 28 (136 aa).

A run of 4 helical transmembrane segments spans residues Val18 to Thr34, Phe56 to Tyr72, Val79 to Leu95, and Gly109 to Ala125.

This sequence belongs to the ERG28 family. In terms of assembly, heterotetramer of erg25, erg26, erg27 and erg28. Erg28 acts as a scaffold to tether erg27 and other 4,4-demethylation-related enzymes, forming a demethylation enzyme complex, in the endoplasmic reticulum.

The protein resides in the endoplasmic reticulum membrane. It functions in the pathway steroid metabolism; ergosterol biosynthesis. Functionally, part of the third module of ergosterol biosynthesis pathway that includes by the late steps of the pathway. Erg28 has a role as a scaffold to help anchor the catalytic components of the C-4 demethylation complex erg25, erg26 and erg27 to the endoplasmic reticulum. The third module or late pathway involves the ergosterol synthesis itself through consecutive reactions that mainly occur in the endoplasmic reticulum (ER) membrane. Firstly, the squalene synthase erg9 catalyzes the condensation of 2 farnesyl pyrophosphate moieties to form squalene, which is the precursor of all steroids. Secondly, squalene is converted into lanosterol by the consecutive action of the squalene epoxidase erg1 and the lanosterol synthase erg7. The lanosterol 14-alpha-demethylase erg11/cyp1 catalyzes C14-demethylation of lanosterol to produce 4,4'-dimethyl cholesta-8,14,24-triene-3-beta-ol. In the next steps, a complex process involving various demethylation, reduction and desaturation reactions catalyzed by the C-14 reductase erg24 and the C-4 demethylation complex erg25-erg26-erg27 leads to the production of zymosterol. Erg28 likely functions in the C-4 demethylation complex reaction by tethering erg26 and Erg27 to the endoplasmic reticulum or to facilitate interaction between these proteins. Then, the sterol 24-C-methyltransferase erg6 catalyzes the methyl transfer from S-adenosyl-methionine to the C-24 of zymosterol to form fecosterol. The C-8 sterol isomerase erg2 catalyzes the reaction which results in unsaturation at C-7 in the B ring of sterols and thus converts fecosterol to episterol. The sterol-C5-desaturases erg31 and erg32 then catalyze the introduction of a C-5 double bond in the B ring to produce 5-dehydroepisterol. The C-22 sterol desaturase erg5 further converts 5-dehydroepisterol into ergosta-5,7,22,24(28)-tetraen-3beta-ol by forming the C-22(23) double bond in the sterol side chain. Finally, ergosta-5,7,22,24(28)-tetraen-3beta-ol is substrate of the C-24(28) sterol reductase erg4 to produce ergosterol. In the genus Schizosaccharomyces, a second route exists between lanosterol and fecosterol, via the methylation of lanosterol to eburicol by erg6, followed by C14-demethylation by erg11/cyp1 and C4-demethylation by the demethylation complex erg25-erg26-erg27. In terms of biological role, extends the chronological lifespan when overexpressed. This Schizosaccharomyces pombe (strain 972 / ATCC 24843) (Fission yeast) protein is Ergosterol biosynthetic protein 28.